We begin with the raw amino-acid sequence, 437 residues long: Kynureninase (437 aa).

Pyridoxal 5'-phosphate contacts are provided by residues Leu-99, Thr-100, 127–130 (FPSD), Ser-183, Asp-212, His-215, and Tyr-237. Residue Lys-238 is modified to N6-(pyridoxal phosphate)lysine. Residues Trp-267 and Asn-295 each coordinate pyridoxal 5'-phosphate.

Belongs to the kynureninase family. In terms of assembly, homodimer. Pyridoxal 5'-phosphate serves as cofactor.

It is found in the cytoplasm. The enzyme catalyses L-kynurenine + H2O = anthranilate + L-alanine + H(+). The catalysed reaction is 3-hydroxy-L-kynurenine + H2O = 3-hydroxyanthranilate + L-alanine + H(+). It functions in the pathway amino-acid degradation; L-kynurenine degradation; L-alanine and anthranilate from L-kynurenine: step 1/1. Its pathway is cofactor biosynthesis; NAD(+) biosynthesis; quinolinate from L-kynurenine: step 2/3. Functionally, catalyzes the cleavage of L-kynurenine (L-Kyn) and L-3-hydroxykynurenine (L-3OHKyn) into anthranilic acid (AA) and 3-hydroxyanthranilic acid (3-OHAA), respectively. The polypeptide is Kynureninase (Yarrowia lipolytica (strain CLIB 122 / E 150) (Yeast)).